The following is a 162-amino-acid chain: Crossover junction endodeoxyribonuclease RuvC (162 aa).

Active-site residues include Asp8, Glu69, and His141. Mg(2+)-binding residues include Asp8, Glu69, and His141.

Belongs to the RuvC family. As to quaternary structure, homodimer which binds Holliday junction (HJ) DNA. The HJ becomes 2-fold symmetrical on binding to RuvC with unstacked arms; it has a different conformation from HJ DNA in complex with RuvA. In the full resolvosome a probable DNA-RuvA(4)-RuvB(12)-RuvC(2) complex forms which resolves the HJ. Mg(2+) is required as a cofactor.

The protein localises to the cytoplasm. It catalyses the reaction Endonucleolytic cleavage at a junction such as a reciprocal single-stranded crossover between two homologous DNA duplexes (Holliday junction).. Its function is as follows. The RuvA-RuvB-RuvC complex processes Holliday junction (HJ) DNA during genetic recombination and DNA repair. Endonuclease that resolves HJ intermediates. Cleaves cruciform DNA by making single-stranded nicks across the HJ at symmetrical positions within the homologous arms, yielding a 5'-phosphate and a 3'-hydroxyl group; requires a central core of homology in the junction. The consensus cleavage sequence is 5'-(A/T)TT(C/G)-3'. Cleavage occurs on the 3'-side of the TT dinucleotide at the point of strand exchange. HJ branch migration catalyzed by RuvA-RuvB allows RuvC to scan DNA until it finds its consensus sequence, where it cleaves and resolves the cruciform DNA. In Wolbachia sp. subsp. Brugia malayi (strain TRS), this protein is Crossover junction endodeoxyribonuclease RuvC.